Reading from the N-terminus, the 466-residue chain is Asparagine--tRNA ligase (466 aa).

This sequence belongs to the class-II aminoacyl-tRNA synthetase family. As to quaternary structure, homodimer.

Its subcellular location is the cytoplasm. The enzyme catalyses tRNA(Asn) + L-asparagine + ATP = L-asparaginyl-tRNA(Asn) + AMP + diphosphate + H(+). The protein is Asparagine--tRNA ligase of Colwellia psychrerythraea (strain 34H / ATCC BAA-681) (Vibrio psychroerythus).